Reading from the N-terminus, the 288-residue chain is Acetyl-coenzyme A carboxylase carboxyl transferase subunit beta (288 aa).

The CoA carboxyltransferase N-terminal domain occupies 33-288; the sequence is LFSQCPGCKH…LVRLHGGSPR (256 aa). Residues Cys37, Cys40, Cys55, and Cys58 each coordinate Zn(2+). Residues 37-58 form a C4-type zinc finger; it reads CPGCKHTIYQKDLGSERICPHC.

The protein belongs to the AccD/PCCB family. Acetyl-CoA carboxylase is a heterohexamer composed of biotin carboxyl carrier protein (AccB), biotin carboxylase (AccC) and two subunits each of ACCase subunit alpha (AccA) and ACCase subunit beta (AccD). It depends on Zn(2+) as a cofactor.

The protein localises to the cytoplasm. The catalysed reaction is N(6)-carboxybiotinyl-L-lysyl-[protein] + acetyl-CoA = N(6)-biotinyl-L-lysyl-[protein] + malonyl-CoA. It functions in the pathway lipid metabolism; malonyl-CoA biosynthesis; malonyl-CoA from acetyl-CoA: step 1/1. In terms of biological role, component of the acetyl coenzyme A carboxylase (ACC) complex. Biotin carboxylase (BC) catalyzes the carboxylation of biotin on its carrier protein (BCCP) and then the CO(2) group is transferred by the transcarboxylase to acetyl-CoA to form malonyl-CoA. The sequence is that of Acetyl-coenzyme A carboxylase carboxyl transferase subunit beta from Streptococcus pneumoniae serotype 4 (strain ATCC BAA-334 / TIGR4).